A 236-amino-acid chain; its full sequence is 2,3,4,5-tetrahydropyridine-2,6-dicarboxylate N-acetyltransferase (236 aa).

It belongs to the transferase hexapeptide repeat family. DapH subfamily.

It carries out the reaction (S)-2,3,4,5-tetrahydrodipicolinate + acetyl-CoA + H2O = L-2-acetamido-6-oxoheptanedioate + CoA. It participates in amino-acid biosynthesis; L-lysine biosynthesis via DAP pathway; LL-2,6-diaminopimelate from (S)-tetrahydrodipicolinate (acetylase route): step 1/3. Functionally, catalyzes the transfer of an acetyl group from acetyl-CoA to tetrahydrodipicolinate. The protein is 2,3,4,5-tetrahydropyridine-2,6-dicarboxylate N-acetyltransferase of Lactobacillus helveticus (strain DPC 4571).